A 518-amino-acid polypeptide reads, in one-letter code: MKFNIKNGTPEKQRSACVVAGIFEQQKLTPAAEALDKSANGYITGILSRGDMKGKAGATLMLHNVPNSACERVLLVGLGKEQELGDKGYRDAVRAVFKALSDTGAADATLFLLEAPVKNRDLSWKVLQIAVGGLESMYRFDRLKSKVEEAEPKLQKITLGIIKSLTEEEQTASEEALQQGLAVGDGMSLAKDLGNLAPNICTPTYLAEQAMNMAKTYKLKVTVLEQKDMEDLGMGALLAVARGSRQPPKLIALEYWGGAKKGKPVVLVGKGVTFDTGGISLKPAGEMDEMKYDMCGAASVLGTVHAVAKMGLPINVVGIIPATENMPGGNATKPGDVVTSMSGQTIEILNTDAEGRLILCDALAYTERYEPEAVIDIATLTGACVIALGHVASGLLSNDDELARELLDASERAVDRAWRLPLFDEYQEQLKSNFADVANIGGRAAGTITAACFLARFTKKYRWAHLDIAGTAWKSGKEKGATGRPVPLLTQFLISRTTRQPGSTGETGSRKNRRKSKE.

Residues K270 and D275 each coordinate Mn(2+). The active site involves K282. Positions 293, 352, and 354 each coordinate Mn(2+). The active site involves R356. Residues S495–T507 show a composition bias toward polar residues. Residues S495–E518 form a disordered region.

It belongs to the peptidase M17 family. It depends on Mn(2+) as a cofactor.

Its subcellular location is the cytoplasm. The enzyme catalyses Release of an N-terminal amino acid, Xaa-|-Yaa-, in which Xaa is preferably Leu, but may be other amino acids including Pro although not Arg or Lys, and Yaa may be Pro. Amino acid amides and methyl esters are also readily hydrolyzed, but rates on arylamides are exceedingly low.. It catalyses the reaction Release of an N-terminal amino acid, preferentially leucine, but not glutamic or aspartic acids.. Its function is as follows. Presumably involved in the processing and regular turnover of intracellular proteins. Catalyzes the removal of unsubstituted N-terminal amino acids from various peptides. The protein is Probable cytosol aminopeptidase of Nitrosospira multiformis (strain ATCC 25196 / NCIMB 11849 / C 71).